Here is a 188-residue protein sequence, read N- to C-terminus: GMP synthase [glutamine-hydrolyzing] subunit A (188 aa).

Residues 2-188 enclose the Glutamine amidotransferase type-1 domain; that stretch reads KVAVIYFGGQ…FKNFIKICRK (187 aa). The active-site Nucleophile is the Cys-79. Catalysis depends on residues His-166 and Glu-168.

In terms of assembly, heterodimer composed of a glutamine amidotransferase subunit (A) and a GMP-binding subunit (B).

It carries out the reaction XMP + L-glutamine + ATP + H2O = GMP + L-glutamate + AMP + diphosphate + 2 H(+). It participates in purine metabolism; GMP biosynthesis; GMP from XMP (L-Gln route): step 1/1. In terms of biological role, catalyzes the synthesis of GMP from XMP. This is GMP synthase [glutamine-hydrolyzing] subunit A from Sulfolobus acidocaldarius (strain ATCC 33909 / DSM 639 / JCM 8929 / NBRC 15157 / NCIMB 11770).